A 201-amino-acid polypeptide reads, in one-letter code: Imidazole glycerol phosphate synthase subunit HisH (201 aa).

The Glutamine amidotransferase type-1 domain occupies 1 to 201 (MIAIIDYGAG…LLKRYEEMIR (201 aa)). C79 (nucleophile) is an active-site residue. Residues H181 and E183 contribute to the active site.

Heterodimer of HisH and HisF.

The protein localises to the cytoplasm. It carries out the reaction 5-[(5-phospho-1-deoxy-D-ribulos-1-ylimino)methylamino]-1-(5-phospho-beta-D-ribosyl)imidazole-4-carboxamide + L-glutamine = D-erythro-1-(imidazol-4-yl)glycerol 3-phosphate + 5-amino-1-(5-phospho-beta-D-ribosyl)imidazole-4-carboxamide + L-glutamate + H(+). It catalyses the reaction L-glutamine + H2O = L-glutamate + NH4(+). The protein operates within amino-acid biosynthesis; L-histidine biosynthesis; L-histidine from 5-phospho-alpha-D-ribose 1-diphosphate: step 5/9. Its function is as follows. IGPS catalyzes the conversion of PRFAR and glutamine to IGP, AICAR and glutamate. The HisH subunit catalyzes the hydrolysis of glutamine to glutamate and ammonia as part of the synthesis of IGP and AICAR. The resulting ammonia molecule is channeled to the active site of HisF. The sequence is that of Imidazole glycerol phosphate synthase subunit HisH from Oceanobacillus iheyensis (strain DSM 14371 / CIP 107618 / JCM 11309 / KCTC 3954 / HTE831).